The chain runs to 331 residues: Glycerol-3-phosphate dehydrogenase [NAD(P)+] (331 aa).

NADPH contacts are provided by Trp-14, Arg-34, and Lys-107. Lys-107, Gly-135, and Ser-137 together coordinate sn-glycerol 3-phosphate. Ala-139 provides a ligand contact to NADPH. Positions 190, 243, 253, 254, and 255 each coordinate sn-glycerol 3-phosphate. The active-site Proton acceptor is the Lys-190. NADPH is bound at residue Arg-254. 2 residues coordinate NADPH: Val-278 and Glu-280.

This sequence belongs to the NAD-dependent glycerol-3-phosphate dehydrogenase family.

Its subcellular location is the cytoplasm. It carries out the reaction sn-glycerol 3-phosphate + NAD(+) = dihydroxyacetone phosphate + NADH + H(+). The catalysed reaction is sn-glycerol 3-phosphate + NADP(+) = dihydroxyacetone phosphate + NADPH + H(+). The protein operates within membrane lipid metabolism; glycerophospholipid metabolism. Its function is as follows. Catalyzes the reduction of the glycolytic intermediate dihydroxyacetone phosphate (DHAP) to sn-glycerol 3-phosphate (G3P), the key precursor for phospholipid synthesis. This is Glycerol-3-phosphate dehydrogenase [NAD(P)+] from Caulobacter vibrioides (strain ATCC 19089 / CIP 103742 / CB 15) (Caulobacter crescentus).